Consider the following 138-residue polypeptide: Basic phospholipase A2 homolog ammodytin L (138 aa).

The signal sequence occupies residues 1–16 (MRILWIVAVCLIGVEG). Disulfide bonds link Cys42–Cys131, Cys44–Cys60, Cys59–Cys111, Cys65–Cys138, Cys66–Cys104, Cys73–Cys97, and Cys91–Cys102. Residues 121 to 133 (KKYKVYLRFKCKG) form an important for membrane-damaging activities in eukaryotes and bacteria; heparin-binding region.

Belongs to the phospholipase A2 family. Group II subfamily. S49 sub-subfamily. As to expression, expressed by the venom gland.

It is found in the secreted. Snake venom phospholipase A2 homolog that lacks enzymatic activity. Is very active in inducing myonecrosis in vivo and shows a potent calcium-independent membrane-damaging activity in vitro, most probably by binding and incorporating in the membrane. Also acts as a presynaptic neurotoxin. A model of myotoxic mechanism has been proposed: an apo Lys49-PLA2 is activated by the entrance of a hydrophobic molecule (e.g. fatty acid) at the hydrophobic channel of the protein leading to a reorientation of a monomer. This reorientation causes a transition between 'inactive' to 'active' states, causing alignment of C-terminal and membrane-docking sites (MDoS) side-by-side and putting the membrane-disruption sites (MDiS) in the same plane, exposed to solvent and in a symmetric position for both monomers. The MDoS region stabilizes the toxin on membrane by the interaction of charged residues with phospholipid head groups. Subsequently, the MDiS region destabilizes the membrane with penetration of hydrophobic residues. This insertion causes a disorganization of the membrane, allowing an uncontrolled influx of ions (i.e. calcium and sodium), and eventually triggering irreversible intracellular alterations and cell death. The sequence is that of Basic phospholipase A2 homolog ammodytin L from Vipera ammodytes ammodytes (Western sand viper).